A 229-amino-acid chain; its full sequence is Putative N-acetylmannosamine-6-phosphate 2-epimerase (229 aa).

It belongs to the NanE family.

The catalysed reaction is an N-acyl-D-glucosamine 6-phosphate = an N-acyl-D-mannosamine 6-phosphate. It participates in amino-sugar metabolism; N-acetylneuraminate degradation; D-fructose 6-phosphate from N-acetylneuraminate: step 3/5. Its function is as follows. Converts N-acetylmannosamine-6-phosphate (ManNAc-6-P) to N-acetylglucosamine-6-phosphate (GlcNAc-6-P). In Shigella sonnei (strain Ss046), this protein is Putative N-acetylmannosamine-6-phosphate 2-epimerase.